A 118-amino-acid chain; its full sequence is Large ribosomal subunit protein bL20 (118 aa).

It belongs to the bacterial ribosomal protein bL20 family.

Functionally, binds directly to 23S ribosomal RNA and is necessary for the in vitro assembly process of the 50S ribosomal subunit. It is not involved in the protein synthesizing functions of that subunit. The sequence is that of Large ribosomal subunit protein bL20 from Salmonella arizonae (strain ATCC BAA-731 / CDC346-86 / RSK2980).